We begin with the raw amino-acid sequence, 2517 residues long: Cullin-9 (2517 aa).

Residue Lys-87 forms a Glycyl lysine isopeptide (Lys-Gly) (interchain with G-Cter in ubiquitin) linkage. Over residues 276-288 (SPELGAGDQSSPC) the composition is skewed to polar residues. Residues 276-296 (SPELGAGDQSSPCATREKSRG) are disordered. Positions 366-439 (RSEFSSRSGY…HWHMLEILGP (74 aa)) constitute a CPH domain. Residues 576–589 (SNEPSSSSTSRNHS) are compositionally biased toward low complexity. Residues 576-639 (SNEPSSSSTS…TETPMAQSDS (64 aa)) form a disordered region. The segment covering 593-609 (DPEEESKSEASFSEEET) has biased composition (acidic residues). Residues 610–630 (ESLKAKAEAPKTEAEPTKTRT) show a composition bias toward basic and acidic residues. Ser-976 carries the phosphoserine modification. The 180-residue stretch at 1143–1322 (PINIPFFDVF…RTCLFYTIRA (180 aa)) folds into the DOC domain. 1363–1370 (AAQALGKT) lines the ATP pocket. Disordered stretches follow at residues 1432 to 1466 (VEPP…VLPS) and 1664 to 1685 (DEEE…AEKE). Positions 1433 to 1443 (EPPPGPSPEPS) are enriched in pro residues. Residue Ser-1457 is modified to Phosphoserine. Positions 1649-1691 (LFQLQRLDKLFLEQEDEEEKRLEEEEEEEEEEEAEKELFIEDP) form a coiled coil. Residues 1664–1683 (DEEEKRLEEEEEEEEEEEAE) show a composition bias toward acidic residues. A Glycyl lysine isopeptide (Lys-Gly) (interchain with G-Cter in NEDD8) cross-link involves residue Lys-1881. The TRIAD supradomain stretch occupies residues 2066-2283 (RPDHCPVCVS…KDYYNCSAMV (218 aa)). Cys-2070, Cys-2073, Cys-2088, His-2090, Cys-2093, Cys-2096, Cys-2115, Cys-2120, Cys-2160, Cys-2166, Cys-2181, Cys-2184, Cys-2189, Cys-2192, His-2198, Cys-2203, Cys-2236, and Cys-2239 together coordinate Zn(2+). Residues 2070–2120 (CPVCVSPLGCDDDLPSLCCMHYCCKSCWNEYLTTRIEQNLVLNCTCPIADC) form an RING-type 1 zinc finger. The IBR-type zinc-finger motif lies at 2140-2203 (SKYEKALLRG…FPEAHYPASC (64 aa)). The RING-type 2; atypical zinc-finger motif lies at 2236 to 2265 (CPSCQAPIEKNEGCLHMTCAKCNHGFCWRC). Cys-2249 is an active-site residue. The Zn(2+) site is built by Cys-2254, Cys-2257, Cys-2262, Cys-2265, His-2273, and Cys-2279. Residues 2365 to 2385 (VEQQTENLELHTNALQILLEE) are a coiled coil. Ser-2436 is subject to Phosphoserine. Residues 2442-2517 (WEAKGPNMPG…EEEDEDEAYD (76 aa)) are disordered. Composition is skewed to acidic residues over residues 2461–2499 (EAEE…ENLD) and 2506–2517 (GDEEEDEDEAYD).

The protein belongs to the cullin family. As to quaternary structure, component of the Cul9-RING complex consisting of CUL9 and RBX1; the CUL9-RBX1 complex is a heterododecamer composed of six CUL9 and six RBX1 protomers. Interacts (via C-terminal TRIAD/RBR supradomain) with E2 ubiquitin-conjugating enzyme UBE2L3. Interacts with CUL7; the interaction with the CUL7 component of the 3M complex leads to inhibition of CUL9 activity. The CUL7-CUL9 heterodimer seems to interact specifically with TP53, likely via the CPH domain. Forms a complex with p53/TP53 in the cytoplasm of unstressed cells. Interacts with UBCH7 and UBCH8. Autoubiquitinated by the CUL9-RBX1 complex at Lys-87. In terms of processing, neddylated. Neddylation is mediated by E1 enzyme UBA3-NAE1 complex and E2 enzyme UBE2F. Structural rearrangment of the C-terminal TRIAD/RBR supradomain may play a role in neddylation and deneddylation. Ubiquitously expressed in all tissues with highest expression in testis brain and kidney.

The protein localises to the cytoplasm. In terms of biological role, core component of a Cul9-RING ubiquitin-protein ligase complex composed of CUL9 and RBX1. The CUL9-RBX1 complex mediates ubiquitination and subsequent degradation of BIRC5 and is required to maintain microtubule dynamics and genome integrity. Acts downstream of the 3M complex, which inhibits the ubiquitination of BIRC5. The CUL9-RBX1 complex also mediates mono-ubiquitination of p53/TP53. Acts as a cytoplasmic anchor protein in p53/TP53-associated protein complex. Regulates the subcellular localization of p53/TP53 and its subsequent function. Ubiquitinates apurinic/apyrimidinic endodeoxyribonuclease APEX2. Ubiquitination by the CUL9-RBX1 complex is predominantly mediated by E2 ubiquitin-conjugating enzymes UBE2L3 and UBE2D2. This is Cullin-9 (CUL9) from Homo sapiens (Human).